The following is a 1070-amino-acid chain: MLGDGNEGISTIPGFNQIQFEGFCRFIDQGLTEELYKFPKIEDTDQEIEFQLFVETYQLVEPLIKERDAVYESLTYSSELYVSAGLIWKNSRDMQEQTIFIGNIPLMNSLGTSIVNGIYRIVINQILQSPGIYYRSELDHNGISVYTGTIISDWGGRSELEIDRKARIWARVSRKQKISILVLSSAMGLNLREILENVCYPEIFLSFLNDKERKKIGSKENSILEFYQQFACVGGDPVFSESLCKELQKKFFQQRCELGRIGRRNMNRKLNLDIPQNNTFLLPRDILAAADHLIGLKFGMGALDDMNHLKNKRIRSVADLLQDQFGLALVRLENVVRGTICGAIRHKLIPTPQNLVTSPPLTTTYESFFGLHPLSQVLDRTNPLTQIVHGRKLSYLGPGGLTGRTASFRIRDIHPSHYGRICPIDTSEGINVGLIGSLSIHARIGHWGSLESPFYEISERSTGVRMLYLSPGSDEYYMVAAGNSLALNRDIQEEQVVPARYRQEFLTIAWEQVHLRSIFPFQYFSIGASLIPFIEHNDANRALMSSNMQRQAVPLSRSEKCIVGTGLERQAALDSGALAIAEREGRIVYTNTDKILLAGNGDILSIPLVIYQRSNKNTCMHQKLRVPRGKCIKKGQILADGAATVGGELALGKNVLVAYIPWEGYNFEDAVLITERLVYEDIYTSFHIRKYEIHTHVTSQGPEKVTNEIPHLEAHLLRNLDKKGIVMLGSWVETGDILVGKLTPQVVKESSYAPEDRLLRAILGIQVSTSKETCLKLPIGGRGRVIDVRWIQKRGGSSYNPETIRVYISQKREIKVGDKVAGRHGNKGIISKILPRQDMPYLQDGRSVDMVFNPLGVPSRMNVGQIFECSLGLAGSLLDRHYRIAPFDERYEQEASRKLVFSELYEASKQTANPWVFEPEYPGKSRIFDGRTGNPFEQPVIIGKPYILKLIHQVDDKIHGRSSGHYALVTQQPLRGRAKQGGQRVGEMEVWALEGFGVAHILQEMLTYKSDHIRARQEVLGTTIIGGTIPNPEDAPESFRLLVRELRSLALELNHFLVSEKNFQINRKEA.

It belongs to the RNA polymerase beta chain family. In terms of assembly, in plastids the minimal PEP RNA polymerase catalytic core is composed of four subunits: alpha, beta, beta', and beta''. When a (nuclear-encoded) sigma factor is associated with the core the holoenzyme is formed, which can initiate transcription.

The protein localises to the plastid. It is found in the chloroplast. It carries out the reaction RNA(n) + a ribonucleoside 5'-triphosphate = RNA(n+1) + diphosphate. DNA-dependent RNA polymerase catalyzes the transcription of DNA into RNA using the four ribonucleoside triphosphates as substrates. The chain is DNA-directed RNA polymerase subunit beta from Solanum tuberosum (Potato).